Consider the following 415-residue polypeptide: WD-40 repeat-containing protein MSI2 (415 aa).

5 WD repeats span residues 166–206 (GHDK…QDKV), 215–255 (GHES…MQHQ), 258–298 (VHER…APLH), 302–342 (SHEG…EEQL), and 361–401 (GHKA…YRDE). The DWD box signature appears at 232–248 (LFGSAGEDGRLVIWDTR).

Belongs to the WD repeat RBAP46/RBAP48/MSI1 family.

The protein resides in the nucleus. Functionally, core histone-binding subunit that may target chromatin assembly factors, chromatin remodeling factors and histone deacetylases to their histone substrates in a manner that is regulated by nucleosomal DNA. The protein is WD-40 repeat-containing protein MSI2 (MSI2) of Arabidopsis thaliana (Mouse-ear cress).